We begin with the raw amino-acid sequence, 464 residues long: Potassium/proton antiporter CemA (464 aa).

5 consecutive transmembrane segments (helical) span residues 36–56, 241–261, 341–361, 389–409, and 425–445; these read FSLS…TEIL, ASVS…QIAI, LLLR…LLIF, ILLL…EILV, and TPCF…YWIF.

It belongs to the CemA family.

Its subcellular location is the plastid. The protein resides in the chloroplast inner membrane. It catalyses the reaction K(+)(in) + H(+)(out) = K(+)(out) + H(+)(in). Its function is as follows. Contributes to K(+)/H(+) antiport activity by supporting proton efflux to control proton extrusion and homeostasis in chloroplasts in a light-dependent manner to modulate photosynthesis. Prevents excessive induction of non-photochemical quenching (NPQ) under continuous-light conditions. Indirectly promotes efficient inorganic carbon uptake into chloroplasts. The polypeptide is Potassium/proton antiporter CemA (Adiantum capillus-veneris (Maidenhair fern)).